The sequence spans 512 residues: 23S rRNA (uracil(1939)-C(5))-methyltransferase RlmD (512 aa).

A compositionally biased stretch (low complexity) spans 1–14 (MQPTDSKTSTSDTT). Residues 1–45 (MQPTDSKTSTSDTTEQPNETQTITIPPSKKKSKPSSKTRRRLKDA) form a disordered region. A compositionally biased stretch (polar residues) spans 15-25 (EQPNETQTITI). Residues 28-42 (SKKKSKPSSKTRRRL) show a composition bias toward basic residues. In terms of domain architecture, TRAM spans 41 to 113 (RLKDAEPLPF…TSFEEGDAVN (73 aa)). Residues Cys127, Cys133, Cys136, and Cys215 each contribute to the [4Fe-4S] cluster site. S-adenosyl-L-methionine is bound by residues Gln340, Phe369, Asn374, Glu393, Asp420, and Asp441. Cys467 functions as the Nucleophile in the catalytic mechanism.

This sequence belongs to the class I-like SAM-binding methyltransferase superfamily. RNA M5U methyltransferase family. RlmD subfamily.

The catalysed reaction is uridine(1939) in 23S rRNA + S-adenosyl-L-methionine = 5-methyluridine(1939) in 23S rRNA + S-adenosyl-L-homocysteine + H(+). Functionally, catalyzes the formation of 5-methyl-uridine at position 1939 (m5U1939) in 23S rRNA. This chain is 23S rRNA (uracil(1939)-C(5))-methyltransferase RlmD, found in Psychrobacter arcticus (strain DSM 17307 / VKM B-2377 / 273-4).